Reading from the N-terminus, the 310-residue chain is AMMECR1-like protein (310 aa).

The segment at Leu26–Thr95 is disordered. Over residues Gly28 to Asp66 the composition is skewed to polar residues. At Ser74 the chain carries Phosphoserine. The 195-residue stretch at Asn97–Arg291 folds into the AMMECR1 domain.

In Homo sapiens (Human), this protein is AMMECR1-like protein (AMMECR1L).